Reading from the N-terminus, the 259-residue chain is Protein CDI (259 aa).

The stretch at 236–259 (FADLWLNEMEEYNKENKKEADNAK) forms a coiled coil.

As to expression, mostly expressed in pollen grains and pollen tubes, and, at low levels, in seedlings, roots, stems, leaves, flowers and siliques.

The protein resides in the cytoplasm. It localises to the cytosol. In terms of biological role, probable nucleotide-diphospho-sugar transferase required for pollen germination and tube growth. The chain is Protein CDI from Arabidopsis thaliana (Mouse-ear cress).